A 632-amino-acid polypeptide reads, in one-letter code: MAU2 chromatid cohesion factor homolog (632 aa).

2 TPR repeats span residues 453-486 and 493-526; these read GGFYYVQGLHAFHKNSFHEAKRFLRETLKMANAE and SCSLVLLSHVFLSIGNSKESMNMVTPAMQLASKI.

Belongs to the SCC4/mau-2 family. Interacts with Nipped-B to form the cohesin loading complex.

It is found in the nucleus. The protein localises to the nucleoplasm. Functionally, required for association of the cohesin complex with chromatin during interphase. Plays a role in sister chromatid cohesion and normal progression through prometaphase. This Drosophila melanogaster (Fruit fly) protein is MAU2 chromatid cohesion factor homolog.